A 552-amino-acid chain; its full sequence is MNVEDLKKSVTNIVHSMYNFDCSEIVSLTRPPKPEYGDWALSLPLKLASLLKSPAIDIAQSIASALLELDGVQDVYVAKPGFINLKLSREHTTGIISEVLEQGSSFGRNTTQSSKKINLEFVSGNPTGPLHLAHTRWAAVGDSIARILINCGADVTREYYINNVGNQIHLFSESVYARALSKSLPKDGYPGEYVKDIARRIQCEFPNIIDLSYEDAIKIFRKRSWQIQIEEIKKSCIAFRVNFDVWFSEESLHEPDRFGKSQIDKALARCKQNGYLFQKNGAFFIRTTEFGDDKDRAVLRSDTSYTYYAADCAYYLNKINRGFSDLVILVGADHHGYVKRFQAMSNIFHVDSENNRKNVQVLLGQMVLLKNKRQSKREGNVIGLSEIIQSVGVDPLRFWFCRYPIDTPIDLDEQHLKKRSNDNPVYYVQYAYARTRSLIRSANLLQMEKFGFFPELLVHETETALVSLLYDYKTVVIDAARFLQPHRVVRYLESLAGAYHKWYDKCRIIPRKGILDKSEAELVNTRLELNRAVGQVLYNALDLIGVSAPERM.

The 'HIGH' region motif lies at 124–134; it reads GNPTGPLHLAH.

This sequence belongs to the class-I aminoacyl-tRNA synthetase family. In terms of assembly, monomer.

The protein localises to the cytoplasm. It carries out the reaction tRNA(Arg) + L-arginine + ATP = L-arginyl-tRNA(Arg) + AMP + diphosphate. This chain is Arginine--tRNA ligase, found in Tropheryma whipplei (strain Twist) (Whipple's bacillus).